The primary structure comprises 305 residues: MSKKLTFQEIILTLQQFWNDQGCMLMQAYDNEKGAGTMSPYTFLRAIGPEPWNAAYVEPSRRPADGRYGENPNRLYQHHQFQVVMKPSPSNIQELYLESLEKLGINPLEHDIRFVEDNWENPSTGSAGLGWEVWLDGMEITQFTYFQQVGGLATSPVTAEVTYGLERLASYIQEVDSVYDIEWADGVKYGEIFIQPEYEHSKYSFEISDQEMLLENFDKFEKEAGRALEEGLVHPAYDYVLKCSHTFNLLDARGAVSVTERAGYIARIRNLARVVAKTFVAERKRLGYPLLDEETRAKLLAEDAE.

Belongs to the class-II aminoacyl-tRNA synthetase family. In terms of assembly, tetramer of two alpha and two beta subunits.

It is found in the cytoplasm. It carries out the reaction tRNA(Gly) + glycine + ATP = glycyl-tRNA(Gly) + AMP + diphosphate. The polypeptide is Glycine--tRNA ligase alpha subunit (Streptococcus pneumoniae serotype 19F (strain G54)).